Reading from the N-terminus, the 70-residue chain is Protein SlyX homolog (70 aa).

Belongs to the SlyX family.

In Shewanella pealeana (strain ATCC 700345 / ANG-SQ1), this protein is Protein SlyX homolog.